The chain runs to 155 residues: 3-dehydroquinate dehydratase (155 aa).

Catalysis depends on Tyr31, which acts as the Proton acceptor. Asn83, His89, and Asp96 together coordinate substrate. His109 (proton donor) is an active-site residue. Substrate is bound by residues 110–111 (LS) and Arg120.

It belongs to the type-II 3-dehydroquinase family. As to quaternary structure, homododecamer.

The enzyme catalyses 3-dehydroquinate = 3-dehydroshikimate + H2O. The protein operates within metabolic intermediate biosynthesis; chorismate biosynthesis; chorismate from D-erythrose 4-phosphate and phosphoenolpyruvate: step 3/7. Catalyzes a trans-dehydration via an enolate intermediate. This Laribacter hongkongensis (strain HLHK9) protein is 3-dehydroquinate dehydratase.